Consider the following 657-residue polypeptide: Threonine--tRNA ligase (657 aa).

A TGS domain is found at Met1 to Thr61. Residues Asp244–Pro549 form a catalytic region. Residues Cys349, His400, and His526 each contribute to the Zn(2+) site.

The protein belongs to the class-II aminoacyl-tRNA synthetase family. In terms of assembly, homodimer. Zn(2+) serves as cofactor.

It localises to the cytoplasm. The enzyme catalyses tRNA(Thr) + L-threonine + ATP = L-threonyl-tRNA(Thr) + AMP + diphosphate + H(+). Catalyzes the attachment of threonine to tRNA(Thr) in a two-step reaction: L-threonine is first activated by ATP to form Thr-AMP and then transferred to the acceptor end of tRNA(Thr). Also edits incorrectly charged L-seryl-tRNA(Thr). This is Threonine--tRNA ligase from Hyphomonas neptunium (strain ATCC 15444).